The sequence spans 356 residues: 5-formaminoimidazole-4-carboxamide-1-(beta)-D-ribofuranosyl 5'-monophosphate synthetase 1 (356 aa).

2 residues coordinate 5-amino-1-(5-phospho-beta-D-ribosyl)imidazole-4-carboxamide: His27 and Ser94. Residues 101–333 (TENFAEMAVP…YADLIQEDLS (233 aa)) form the ATP-grasp domain. ATP-binding positions include 145–196 (PRDI…TRYY) and Glu226. Asn255 is a binding site for 5-amino-1-(5-phospho-beta-D-ribosyl)imidazole-4-carboxamide. Mg(2+) is bound by residues Glu293 and Glu306.

Belongs to the phosphohexose mutase family. Mg(2+) is required as a cofactor. The cofactor is Mn(2+).

The enzyme catalyses 5-amino-1-(5-phospho-beta-D-ribosyl)imidazole-4-carboxamide + formate + ATP = 5-formamido-1-(5-phospho-D-ribosyl)imidazole-4-carboxamide + ADP + phosphate. It participates in purine metabolism; IMP biosynthesis via de novo pathway; 5-formamido-1-(5-phospho-D-ribosyl)imidazole-4-carboxamide from 5-amino-1-(5-phospho-D-ribosyl)imidazole-4-carboxamide (formate route): step 1/1. Catalyzes the ATP- and formate-dependent formylation of 5-aminoimidazole-4-carboxamide-1-beta-d-ribofuranosyl 5'-monophosphate (AICAR) to 5-formaminoimidazole-4-carboxamide-1-beta-d-ribofuranosyl 5'-monophosphate (FAICAR) in the absence of folates. This chain is 5-formaminoimidazole-4-carboxamide-1-(beta)-D-ribofuranosyl 5'-monophosphate synthetase 1, found in Methanosarcina mazei (strain ATCC BAA-159 / DSM 3647 / Goe1 / Go1 / JCM 11833 / OCM 88) (Methanosarcina frisia).